The chain runs to 153 residues: Pheromone-binding protein Gp-9 (153 aa).

The signal sequence occupies residues 1-19 (MKTFVLHIFIFALVAFASA). Intrachain disulfides connect Cys-37–Cys-77, Cys-73–Cys-129, and Cys-118–Cys-138.

It belongs to the PBP/GOBP family. In terms of assembly, homodimer.

It is found in the secreted. Functionally, colony queen number, a major feature of social organization, is associated with worker genotype for Gp-9. Colonies are headed by either a single reproductive queen (monogyne form) or multiple queens (polygyne form). Differences in worker Gp-9 genotypes between social forms may cause differences in workers' abilities to recognize queens and regulate their numbers. The chain is Pheromone-binding protein Gp-9 from Solenopsis richteri (Black imported fire ant).